Here is a 249-residue protein sequence, read N- to C-terminus: 2,3-bisphosphoglycerate-dependent phosphoglycerate mutase (249 aa).

Substrate-binding positions include 9–16, 22–23, Arg61, 88–91, Lys99, 115–116, and 184–185; these read RHGQSQWN, TG, ERHY, RR, and GN. Residue His10 is the Tele-phosphohistidine intermediate of the active site. Glu88 (proton donor/acceptor) is an active-site residue.

The protein belongs to the phosphoglycerate mutase family. BPG-dependent PGAM subfamily. As to quaternary structure, homodimer.

The catalysed reaction is (2R)-2-phosphoglycerate = (2R)-3-phosphoglycerate. It participates in carbohydrate degradation; glycolysis; pyruvate from D-glyceraldehyde 3-phosphate: step 3/5. Its function is as follows. Catalyzes the interconversion of 2-phosphoglycerate and 3-phosphoglycerate. The chain is 2,3-bisphosphoglycerate-dependent phosphoglycerate mutase from Xanthomonas campestris pv. campestris (strain B100).